We begin with the raw amino-acid sequence, 82 residues long: Protein RALF-like 8 (82 aa).

Residues 1 to 28 (MGMSKSIKVILSLALVVFLALAGTKVEA) form the signal peptide. Cystine bridges form between Cys-47–Cys-55 and Cys-67–Cys-73.

This sequence belongs to the plant rapid alkalinization factor (RALF) family. In terms of tissue distribution, expressed in leaves and flowers.

The protein localises to the secreted. Cell signaling peptide that may regulate plant stress, growth, and development. Mediates a rapid alkalinization of extracellular space by mediating a transient increase in the cytoplasmic Ca(2+) concentration leading to a calcium-dependent signaling events through a cell surface receptor and a concomitant activation of some intracellular mitogen-activated protein kinases. The polypeptide is Protein RALF-like 8 (RALFL8) (Arabidopsis thaliana (Mouse-ear cress)).